We begin with the raw amino-acid sequence, 473 residues long: Membrane protein TMS1 (473 aa).

Residues 1 to 6 are Cytoplasmic-facing; the sequence is MGAVIS. Residues 7–29 form a helical membrane-spanning segment; it reads LPVSMAGSFVASCFGGCCSNLVT. At 30–38 the chain is on the vacuolar side; the sequence is KTASSLGSS. The chain crosses the membrane as a helical span at residues 39-61; the sequence is SLGTRLLYAVWLLLNSLISWVSY. Over 62 to 81 the chain is Cytoplasmic; it reads SANKSILWPGKTCTGTGECG. Residues 82–104 form a helical membrane-spanning segment; the sequence is FFTVHRLNFALGCLHLILALVLT. Residues 105–118 lie on the Vacuolar side of the membrane; the sequence is GVKSTNDVRAALQN. A helical transmembrane segment spans residues 119-138; it reads SWWSLKFILYLCLIVLSFVI. At 139-144 the chain is on the cytoplasmic side; it reads PNDFYI. The helical transmembrane segment at 145–167 threads the bilayer; it reads FFSKWVSVPSGAIFILVGLILLV. Topologically, residues 168 to 194 are vacuolar; that stretch reads DFAHEWAETCISHVESEDEDSSFWQRF. The chain crosses the membrane as a helical span at residues 195-217; that stretch reads LVLGTTSMYTASIIMTVVMYVMF. Residues 218 to 228 are Cytoplasmic-facing; sequence CHQQCNMNQTA. Residues 229–246 form a helical membrane-spanning segment; sequence VTVNLILTVITLVLSVNP. The Vacuolar portion of the chain corresponds to 247–295; sequence KIQEANPKSGLAQSSMVSVYCTYLTMSAMSSEPDDKMCNPLVRSSGTRK. Residues 296–318 form a helical membrane-spanning segment; the sequence is FSIILGSLFTFIAIAYTTTRAAA. At 319–398 the chain is on the cytoplasmic side; it reads NSAFQGTNTN…DDERTGTKYN (80 aa). Residues 399–421 form a helical membrane-spanning segment; it reads YTLFHVIFFLATQWIAILLTINV. At 422–435 the chain is on the vacuolar side; the sequence is TQDDVGDFIPVGRT. Residues 436–458 traverse the membrane as a helical segment; it reads YFYSWVKIVSAWICYALYGWTVV. At 459–473 the chain is on the cytoplasmic side; that stretch reads APAIMPDRFDYENYY.

It belongs to the TDE1 family.

It localises to the membrane. In Saccharomyces cerevisiae (strain ATCC 204508 / S288c) (Baker's yeast), this protein is Membrane protein TMS1 (TMS1).